The chain runs to 209 residues: Glutathione S-transferase 2 (209 aa).

A GST N-terminal domain is found at 1 to 81 (MLDFYYLPGS…YLCDQYGDED (81 aa)). Residues Ser10, 51-53 (RTI), and 65-67 (ESR) contribute to the glutathione site. Residues 88 to 209 (DTIQRAIVNQ…SGAKEFLTYK (122 aa)) form the GST C-terminal domain.

The protein belongs to the GST superfamily. Theta family. Homodimer.

The enzyme catalyses RX + glutathione = an S-substituted glutathione + a halide anion + H(+). Functionally, conjugation of reduced glutathione to a wide number of exogenous and endogenous hydrophobic electrophiles. In Anopheles gambiae (African malaria mosquito), this protein is Glutathione S-transferase 2 (GstD2).